A 199-amino-acid chain; its full sequence is dITP/XTP pyrophosphatase (199 aa).

8 to 13 (THNRNK) lines the substrate pocket. Catalysis depends on Asp68, which acts as the Proton acceptor. Asp68 contributes to the Mg(2+) binding site. Substrate contacts are provided by residues Ser69, 151 to 154 (HGYD), Lys174, and 179 to 180 (HR).

The protein belongs to the HAM1 NTPase family. Homodimer. Mg(2+) is required as a cofactor.

It catalyses the reaction XTP + H2O = XMP + diphosphate + H(+). The catalysed reaction is dITP + H2O = dIMP + diphosphate + H(+). The enzyme catalyses ITP + H2O = IMP + diphosphate + H(+). In terms of biological role, pyrophosphatase that catalyzes the hydrolysis of nucleoside triphosphates to their monophosphate derivatives, with a high preference for the non-canonical purine nucleotides XTP (xanthosine triphosphate), dITP (deoxyinosine triphosphate) and ITP. Seems to function as a house-cleaning enzyme that removes non-canonical purine nucleotides from the nucleotide pool, thus preventing their incorporation into DNA/RNA and avoiding chromosomal lesions. This chain is dITP/XTP pyrophosphatase, found in Leifsonia xyli subsp. xyli (strain CTCB07).